The chain runs to 140 residues: Large ribosomal subunit protein uL14 (140 aa).

The protein belongs to the universal ribosomal protein uL14 family. As to quaternary structure, part of the 50S ribosomal subunit. Forms a cluster with proteins L3 and L24e, part of which may contact the 16S rRNA in 2 intersubunit bridges.

Functionally, binds to 23S rRNA. Forms part of two intersubunit bridges in the 70S ribosome. The protein is Large ribosomal subunit protein uL14 of Aeropyrum pernix (strain ATCC 700893 / DSM 11879 / JCM 9820 / NBRC 100138 / K1).